Consider the following 141-residue polypeptide: Hemoglobin subunit alpha (141 aa).

The Globin domain occupies 1–141 (VLSASDKTNL…VSTVLTSKYR (141 aa)). Residue Ser3 is modified to Phosphoserine. Position 7 is an N6-succinyllysine (Lys7). Thr8 is subject to Phosphothreonine. Lys11 bears the N6-succinyllysine mark. Lys16 carries the N6-acetyllysine; alternate modification. At Lys16 the chain carries N6-succinyllysine; alternate. Tyr24 bears the Phosphotyrosine mark. A Phosphoserine modification is found at Ser35. An N6-succinyllysine modification is found at Lys40. Ser49 bears the Phosphoserine mark. His58 contacts O2. His87 provides a ligand contact to heme b. Ser102 bears the Phosphoserine mark. Thr108 bears the Phosphothreonine mark. Ser124 is modified (phosphoserine). Residues Thr134 and Thr137 each carry the phosphothreonine modification. Ser138 carries the post-translational modification Phosphoserine.

Belongs to the globin family. As to quaternary structure, heterotetramer of two alpha chains and two beta chains. Red blood cells.

Functionally, involved in oxygen transport from the lung to the various peripheral tissues. This chain is Hemoglobin subunit alpha, found in Blarina brevicauda (Northern short-tailed shrew).